The following is a 122-amino-acid chain: Large ribosomal subunit protein uL14 (122 aa).

Belongs to the universal ribosomal protein uL14 family. In terms of assembly, part of the 50S ribosomal subunit. Forms a cluster with proteins L3 and L19. In the 70S ribosome, L14 and L19 interact and together make contacts with the 16S rRNA in bridges B5 and B8.

Binds to 23S rRNA. Forms part of two intersubunit bridges in the 70S ribosome. The polypeptide is Large ribosomal subunit protein uL14 (Acaryochloris marina (strain MBIC 11017)).